A 392-amino-acid polypeptide reads, in one-letter code: MASHKLLVHPPKALLKPLSIPNRLLLGPGPSNLAPRIMAAGGLQIIGPMSKDMYQIMDEIKEGIRYVFQTRNPLTLVISGSAHCALEAALVNVLEPGDSFLVGANGIWGQRAVDIGERMGARVHPMTKDPGGHYTLQEVEEGLAQHKPVLLFLTHGESSTGVLQPLDGFGELCHRYKCLLLVDSVVSVGGTPVYMDQQGIDILYSGSQKALNAPPGTSLISFSDKAKKKMYSRKTKPFSFYLDIKWLANFWGCDDQPRMYHHTIPIISLYSLRESLALIAEQGLENSWRKHREAAAYLHGRLQALGLQLFVKDPALRLPTVTTVAVPAGYDWRDIVSYVMDHFDIEIMGGLGPPTGKVLRIGLLGYNATHENVDRVTEALRAALQHCPKKKL.

Position 209 is an N6-(pyridoxal phosphate)lysine (Lys209). An N6-acetyllysine; alternate modification is found at Lys225. The residue at position 225 (Lys225) is an N6-succinyllysine; alternate. Residues Lys234 and Lys312 each carry the N6-acetyllysine modification. Arg360 contacts substrate. The short motif at 390 to 392 (KKL) is the Microbody targeting signal element.

Belongs to the class-V pyridoxal-phosphate-dependent aminotransferase family. As to quaternary structure, homodimer. Pyridoxal 5'-phosphate is required as a cofactor.

The protein localises to the peroxisome. The catalysed reaction is L-serine + pyruvate = 3-hydroxypyruvate + L-alanine. The enzyme catalyses glyoxylate + L-alanine = glycine + pyruvate. Peroxisomal aminotransferase that catalyzes the transamination of glyoxylate to glycine and contributes to the glyoxylate detoxification. Also catalyzes the transamination between L-serine and pyruvate and contributes to gluconeogenesis from the L-serine metabolism. This Pongo abelii (Sumatran orangutan) protein is Alanine--glyoxylate aminotransferase.